A 127-amino-acid chain; its full sequence is Large ribosomal subunit protein bL17 (127 aa).

The protein belongs to the bacterial ribosomal protein bL17 family. As to quaternary structure, part of the 50S ribosomal subunit. Contacts protein L32.

In Vibrio vulnificus (strain CMCP6), this protein is Large ribosomal subunit protein bL17.